The following is a 923-amino-acid chain: Ubiquitin carboxyl-terminal hydrolase 10 (923 aa).

Positions Phe-19–Ile-134 constitute a DUSP domain. The interval Asn-65–Ser-91 is disordered. A USP domain is found at Ala-304–Val-895. The Nucleophile role is filled by Cys-313. His-853 acts as the Proton acceptor in catalysis.

The protein belongs to the peptidase C19 family.

It catalyses the reaction Thiol-dependent hydrolysis of ester, thioester, amide, peptide and isopeptide bonds formed by the C-terminal Gly of ubiquitin (a 76-residue protein attached to proteins as an intracellular targeting signal).. In terms of biological role, recognizes and hydrolyzes the peptide bond at the C-terminal Gly of ubiquitin. Involved in the processing of poly-ubiquitin precursors as well as that of ubiquitinated proteins. This Arabidopsis thaliana (Mouse-ear cress) protein is Ubiquitin carboxyl-terminal hydrolase 10 (UBP10).